Consider the following 342-residue polypeptide: L-threonine 3-dehydrogenase (342 aa).

C38 provides a ligand contact to Zn(2+). Residues T40 and H43 each act as charge relay system in the active site. The Zn(2+) site is built by H63 and E64. NAD(+) is bound by residues I175, D195, R200, 263–265 (LGI), and 287–288 (VY).

It belongs to the zinc-containing alcohol dehydrogenase family. Homotetramer. The cofactor is Zn(2+).

It is found in the cytoplasm. It carries out the reaction L-threonine + NAD(+) = (2S)-2-amino-3-oxobutanoate + NADH + H(+). The protein operates within amino-acid degradation; L-threonine degradation via oxydo-reductase pathway; glycine from L-threonine: step 1/2. Functionally, catalyzes the NAD(+)-dependent oxidation of L-threonine to 2-amino-3-ketobutyrate. This Ruegeria pomeroyi (strain ATCC 700808 / DSM 15171 / DSS-3) (Silicibacter pomeroyi) protein is L-threonine 3-dehydrogenase.